Reading from the N-terminus, the 101-residue chain is Trp operon repressor homolog (101 aa).

A DNA-binding region spans residues 59 to 82 (QREIQQNLSTSAATITRGSNMLKM).

The protein belongs to the TrpR family. Homodimer.

The protein resides in the cytoplasm. This protein is an aporepressor. When complexed with L-tryptophan it binds the operator region of the trp operon and prevents the initiation of transcription. This Actinobacillus succinogenes (strain ATCC 55618 / DSM 22257 / CCUG 43843 / 130Z) protein is Trp operon repressor homolog.